We begin with the raw amino-acid sequence, 106 residues long: Large ribosomal subunit protein P1A (106 aa).

An N-acetylserine modification is found at Ser2. Residues 73–106 are disordered; the sequence is GGVAGGEAGEAEAEKEEEEAKEESDDDMGFGLFD. A compositionally biased stretch (acidic residues) spans 81–100; the sequence is GEAEAEKEEEEAKEESDDDM. Ser96 carries the post-translational modification Phosphoserine.

It belongs to the eukaryotic ribosomal protein P1/P2 family. As to quaternary structure, component of the large ribosomal subunit (LSU). Mature yeast ribosomes consist of a small (40S) and a large (60S) subunit. The 40S small subunit contains 1 molecule of ribosomal RNA (18S rRNA) and 33 different proteins (encoded by 57 genes). The large 60S subunit contains 3 rRNA molecules (25S, 5.8S and 5S rRNA) and 46 different proteins (encoded by 81 genes). The 5 acidic ribosomal P-proteins form the stalk structure of the 60S subunit. They are organized as a pentameric complex in which uL10/P0 interacts with 2 heterodimers, P1A-P2B and P1B-P2A. In terms of processing, N-terminally acetylated by acetyltransferase NatA.

The protein localises to the cytoplasm. In terms of biological role, component of the ribosome, a large ribonucleoprotein complex responsible for the synthesis of proteins in the cell. The small ribosomal subunit (SSU) binds messenger RNAs (mRNAs) and translates the encoded message by selecting cognate aminoacyl-transfer RNA (tRNA) molecules. The large subunit (LSU) contains the ribosomal catalytic site termed the peptidyl transferase center (PTC), which catalyzes the formation of peptide bonds, thereby polymerizing the amino acids delivered by tRNAs into a polypeptide chain. The nascent polypeptides leave the ribosome through a tunnel in the LSU and interact with protein factors that function in enzymatic processing, targeting, and the membrane insertion of nascent chains at the exit of the ribosomal tunnel. The protein is Large ribosomal subunit protein P1A of Saccharomyces cerevisiae (strain ATCC 204508 / S288c) (Baker's yeast).